A 362-amino-acid polypeptide reads, in one-letter code: Spermidine/putrescine import ATP-binding protein PotA (362 aa).

In terms of domain architecture, ABC transporter spans 4–235 (IKLDHITKQY…PVNDFVARFI (232 aa)). An ATP-binding site is contributed by 37–44 (GPSGSGKT).

This sequence belongs to the ABC transporter superfamily. Spermidine/putrescine importer (TC 3.A.1.11.1) family. The complex is composed of two ATP-binding proteins (PotA), two transmembrane proteins (PotB and PotC) and a solute-binding protein (PotD).

Its subcellular location is the cell membrane. The catalysed reaction is ATP + H2O + polyamine-[polyamine-binding protein]Side 1 = ADP + phosphate + polyamineSide 2 + [polyamine-binding protein]Side 1.. In terms of biological role, part of the ABC transporter complex PotABCD involved in spermidine/putrescine import. Responsible for energy coupling to the transport system. The protein is Spermidine/putrescine import ATP-binding protein PotA of Lactobacillus delbrueckii subsp. bulgaricus (strain ATCC 11842 / DSM 20081 / BCRC 10696 / JCM 1002 / NBRC 13953 / NCIMB 11778 / NCTC 12712 / WDCM 00102 / Lb 14).